The following is a 107-amino-acid chain: Insulin (107 aa).

A signal peptide spans 1–24; it reads MALWIRSLPLLALLVFSGPGTSYA. 3 disulfides stabilise this stretch: Cys31-Cys93, Cys43-Cys106, and Cys92-Cys97. A propeptide spans 57–84 (c peptide); it reads DVEQPLVSSPLRGEAGVLPFQQEEYEKV.

The protein belongs to the insulin family. Heterodimer of a B chain and an A chain linked by two disulfide bonds.

The protein localises to the secreted. Its function is as follows. Insulin decreases blood glucose concentration. It increases cell permeability to monosaccharides, amino acids and fatty acids. It accelerates glycolysis, the pentose phosphate cycle, and glycogen synthesis in liver. This Gallus gallus (Chicken) protein is Insulin (INS).